A 109-amino-acid polypeptide reads, in one-letter code: Co-chaperonin GroES (109 aa).

This sequence belongs to the GroES chaperonin family. Heptamer of 7 subunits arranged in a ring. Interacts with the chaperonin GroEL.

The protein resides in the cytoplasm. In terms of biological role, together with the chaperonin GroEL, plays an essential role in assisting protein folding. The GroEL-GroES system forms a nano-cage that allows encapsulation of the non-native substrate proteins and provides a physical environment optimized to promote and accelerate protein folding. GroES binds to the apical surface of the GroEL ring, thereby capping the opening of the GroEL channel. The chain is Co-chaperonin GroES from Methanosarcina acetivorans (strain ATCC 35395 / DSM 2834 / JCM 12185 / C2A).